A 298-amino-acid polypeptide reads, in one-letter code: ATP phosphoribosyltransferase (298 aa).

This sequence belongs to the ATP phosphoribosyltransferase family. Long subfamily. The cofactor is Mg(2+).

It localises to the cytoplasm. It catalyses the reaction 1-(5-phospho-beta-D-ribosyl)-ATP + diphosphate = 5-phospho-alpha-D-ribose 1-diphosphate + ATP. It participates in amino-acid biosynthesis; L-histidine biosynthesis; L-histidine from 5-phospho-alpha-D-ribose 1-diphosphate: step 1/9. With respect to regulation, feedback inhibited by histidine. Its function is as follows. Catalyzes the condensation of ATP and 5-phosphoribose 1-diphosphate to form N'-(5'-phosphoribosyl)-ATP (PR-ATP). Has a crucial role in the pathway because the rate of histidine biosynthesis seems to be controlled primarily by regulation of HisG enzymatic activity. The protein is ATP phosphoribosyltransferase of Aliivibrio salmonicida (strain LFI1238) (Vibrio salmonicida (strain LFI1238)).